A 115-amino-acid chain; its full sequence is Somatostatin-1 (115 aa).

An N-terminal signal peptide occupies residues 1 to 24 (MQSCRVQCALTLLSLALAINSISA). The propeptide occupies 25 to 99 (APTDPRLRQF…NSSPALAPRE (75 aa)). The interval 60-79 (SQTDNEALESDDLPRGAEQD) is disordered. Residues Cys104 and Cys115 are joined by a disulfide bond.

The protein belongs to the somatostatin family.

It is found in the secreted. Its function is as follows. Somatostatin inhibits the release of somatotropin. The polypeptide is Somatostatin-1 (sst1) (Pelophylax ridibundus (Marsh frog)).